Consider the following 174-residue polypeptide: Neuromedin-U (174 aa).

An N-terminal signal peptide occupies residues 1 to 37 (MSRAAGHRPGLSAGQLAAATASPLLSLLLLLACCADA). A propeptide spanning residues 38-105 (CKGVPISPQR…EQSEKDNTKR (68 aa)) is cleaved from the precursor. Met-141 is subject to Methionine sulfoxide; partial. Asn-166 is subject to Asparagine amide. A propeptide spanning residues 170 to 174 (STSFI) is cleaved from the precursor.

This sequence belongs to the NmU family.

It is found in the secreted. Ligand for receptors NMUR1 and NMUR2. Stimulates muscle contractions of specific regions of the gastrointestinal tract. Its function is as follows. Does not function as a ligand for either NMUR1 or NMUR2. Indirectly induces prolactin release although its potency is much lower than that of neuromedin precursor-related peptide 36. Functionally, does not function as a ligand for either NMUR1 or NMUR2. Indirectly induces prolactin release from lactotroph cells in the pituitary gland, probably via the hypothalamic dopaminergic system. In terms of biological role, stimulates muscle contractions of specific regions of the gastrointestinal tract. The chain is Neuromedin-U (Nmu) from Mus musculus (Mouse).